A 140-amino-acid chain; its full sequence is Small ribosomal subunit protein uS12 (140 aa).

A disordered region spans residues 33–55 (KEQTNVSSPQKRGVCTRVGTMTP). Position 102 is a 3-methylthioaspartic acid (aspartate 102).

It belongs to the universal ribosomal protein uS12 family. In terms of assembly, part of the 30S ribosomal subunit. Contacts proteins S8 and S17. May interact with IF1 in the 30S initiation complex.

In terms of biological role, with S4 and S5 plays an important role in translational accuracy. Interacts with and stabilizes bases of the 16S rRNA that are involved in tRNA selection in the A site and with the mRNA backbone. Located at the interface of the 30S and 50S subunits, it traverses the body of the 30S subunit contacting proteins on the other side and probably holding the rRNA structure together. The combined cluster of proteins S8, S12 and S17 appears to hold together the shoulder and platform of the 30S subunit. The protein is Small ribosomal subunit protein uS12 of Geobacillus thermodenitrificans (strain NG80-2).